We begin with the raw amino-acid sequence, 485 residues long: Glutamyl-tRNA(Gln) amidotransferase subunit A (485 aa).

Catalysis depends on charge relay system residues Lys-78 and Ser-153. The active-site Acyl-ester intermediate is the Ser-177.

Belongs to the amidase family. GatA subfamily. As to quaternary structure, heterotrimer of A, B and C subunits.

It catalyses the reaction L-glutamyl-tRNA(Gln) + L-glutamine + ATP + H2O = L-glutaminyl-tRNA(Gln) + L-glutamate + ADP + phosphate + H(+). Its function is as follows. Allows the formation of correctly charged Gln-tRNA(Gln) through the transamidation of misacylated Glu-tRNA(Gln) in organisms which lack glutaminyl-tRNA synthetase. The reaction takes place in the presence of glutamine and ATP through an activated gamma-phospho-Glu-tRNA(Gln). This is Glutamyl-tRNA(Gln) amidotransferase subunit A from Bacillus cereus (strain AH820).